The primary structure comprises 402 residues: Phosphopentomutase (402 aa).

Residues D10, D301, H306, D342, H343, and H354 each coordinate Mn(2+).

It belongs to the phosphopentomutase family. The cofactor is Mn(2+).

The protein localises to the cytoplasm. The enzyme catalyses 2-deoxy-alpha-D-ribose 1-phosphate = 2-deoxy-D-ribose 5-phosphate. The catalysed reaction is alpha-D-ribose 1-phosphate = D-ribose 5-phosphate. It participates in carbohydrate degradation; 2-deoxy-D-ribose 1-phosphate degradation; D-glyceraldehyde 3-phosphate and acetaldehyde from 2-deoxy-alpha-D-ribose 1-phosphate: step 1/2. Its function is as follows. Isomerase that catalyzes the conversion of deoxy-ribose 1-phosphate (dRib-1-P) and ribose 1-phosphate (Rib-1-P) to deoxy-ribose 5-phosphate (dRib-5-P) and ribose 5-phosphate (Rib-5-P), respectively. The chain is Phosphopentomutase from Aeromonas hydrophila subsp. hydrophila (strain ATCC 7966 / DSM 30187 / BCRC 13018 / CCUG 14551 / JCM 1027 / KCTC 2358 / NCIMB 9240 / NCTC 8049).